The sequence spans 218 residues: Histone H1 (218 aa).

2 stretches are compositionally biased toward low complexity: residues 1–19 (MSET…GAKA) and 27–39 (AAGG…PAGP). Disordered stretches follow at residues 1 to 41 (MSET…GPSV) and 89 to 218 (VGKG…PKKK). An N-acetylserine modification is found at serine 2. In terms of domain architecture, H15 spans 37 to 110 (AGPSVTELIT…GASGSFKLNK (74 aa)). Composition is skewed to basic residues over residues 119–133 (ATKK…KPAA), 141–158 (KKPK…KAKK), 166–184 (KAAK…KKAA), and 191–218 (KAVK…PKKK).

It belongs to the histone H1/H5 family.

It localises to the nucleus. The protein localises to the chromosome. In terms of biological role, histones H1 are necessary for the condensation of nucleosome chains into higher-order structures. This chain is Histone H1, found in Anas platyrhynchos (Mallard).